A 373-amino-acid chain; its full sequence is Carboxylesterase/phospholipase LipF (373 aa).

An Involved in the stabilization of the negatively charged intermediate by the formation of the oxyanion hole motif is present at residues 116–118 (HGG). Active-site residues include Ser186, Glu285, and His315.

This sequence belongs to the 'GDXG' lipolytic enzyme family.

The catalysed reaction is a carboxylic ester + H2O = an alcohol + a carboxylate + H(+). The enzyme catalyses a 1,2-diacyl-sn-glycero-3-phosphocholine + H2O = phosphocholine + a 1,2-diacyl-sn-glycerol + H(+). In terms of biological role, a short-chain esterase and phospholipase. The polypeptide is Carboxylesterase/phospholipase LipF (Mycobacterium tuberculosis (strain CDC 1551 / Oshkosh)).